The sequence spans 384 residues: 1-deoxy-D-xylulose 5-phosphate reductoisomerase (384 aa).

Residues threonine 10, glycine 11, serine 12, isoleucine 13, arginine 37, asparagine 38, and asparagine 124 each contribute to the NADPH site. Residue lysine 125 participates in 1-deoxy-D-xylulose 5-phosphate binding. Glutamate 126 serves as a coordination point for NADPH. Aspartate 150 provides a ligand contact to Mn(2+). The 1-deoxy-D-xylulose 5-phosphate site is built by serine 151, glutamate 152, serine 176, and histidine 199. Glutamate 152 provides a ligand contact to Mn(2+). NADPH is bound at residue glycine 205. 1-deoxy-D-xylulose 5-phosphate-binding residues include serine 212, asparagine 217, lysine 218, and glutamate 221. Glutamate 221 lines the Mn(2+) pocket.

It belongs to the DXR family. Requires Mg(2+) as cofactor. It depends on Mn(2+) as a cofactor.

It carries out the reaction 2-C-methyl-D-erythritol 4-phosphate + NADP(+) = 1-deoxy-D-xylulose 5-phosphate + NADPH + H(+). It participates in isoprenoid biosynthesis; isopentenyl diphosphate biosynthesis via DXP pathway; isopentenyl diphosphate from 1-deoxy-D-xylulose 5-phosphate: step 1/6. In terms of biological role, catalyzes the NADPH-dependent rearrangement and reduction of 1-deoxy-D-xylulose-5-phosphate (DXP) to 2-C-methyl-D-erythritol 4-phosphate (MEP). This chain is 1-deoxy-D-xylulose 5-phosphate reductoisomerase, found in Clostridium perfringens (strain 13 / Type A).